A 535-amino-acid polypeptide reads, in one-letter code: Sterol 26-hydroxylase, mitochondrial (535 aa).

A mitochondrion-targeting transit peptide spans Met-1–Thr-36. Lys-286 carries the post-translational modification N6-acetyllysine. The segment at Pro-387–Pro-401 is sterol-binding. Cys-480 contributes to the heme binding site. An N6-acetyllysine modification is found at Lys-524.

The protein belongs to the cytochrome P450 family. As to quaternary structure, interacts with HSP70; this interaction is required for initial targeting to mitochondria. Heme is required as a cofactor. Expressed in all tissues tested. Highest expression in liver and duodenum, followed by adrenal gland and lung. Low expression in kidney and spleen.

It localises to the mitochondrion inner membrane. The catalysed reaction is 5beta-cholestane-3alpha,7alpha,12alpha-triol + 6 reduced [adrenodoxin] + 3 O2 + 5 H(+) = (25R)-3alpha,7alpha,12alpha-trihydroxy-5beta-cholestan-26-oate + 6 oxidized [adrenodoxin] + 4 H2O. It carries out the reaction cholestanol + 2 reduced [adrenodoxin] + O2 + 2 H(+) = (25R)-26-hydroxycholestanol + 2 oxidized [adrenodoxin] + H2O. The enzyme catalyses (25R)-3beta-hydroxycholest-5-en-7-one-26-al + 2 reduced [adrenodoxin] + O2 + H(+) = (25R)-3beta-hydroxycholest-5-en-7-one-26-oate + 2 oxidized [adrenodoxin] + H2O. It catalyses the reaction (25R)-3beta,26-dihydroxycholest-5-en-7-one + 2 reduced [adrenodoxin] + O2 + 2 H(+) = (25R)-3beta-hydroxycholest-5-en-7-one-26-al + 2 oxidized [adrenodoxin] + 2 H2O. The catalysed reaction is 7-oxocholesterol + 2 reduced [adrenodoxin] + O2 + 2 H(+) = (25R)-3beta,26-dihydroxycholest-5-en-7-one + 2 oxidized [adrenodoxin] + H2O. It carries out the reaction calciol + 2 reduced [adrenodoxin] + O2 + 2 H(+) = calcidiol + 2 oxidized [adrenodoxin] + H2O. The enzyme catalyses (25R)-5beta-cholestane-3alpha,7alpha,12alpha,26-tetrol + 2 reduced [adrenodoxin] + O2 + 2 H(+) = (25R)-3alpha,7alpha,12alpha-trihydroxy-5beta-cholestan-26-al + 2 oxidized [adrenodoxin] + 2 H2O. It catalyses the reaction 2 reduced [adrenodoxin] + cholesterol + O2 + 2 H(+) = (25R)-cholest-5-ene-3beta,26-diol + 2 oxidized [adrenodoxin] + H2O. The catalysed reaction is (25R)-3beta,4beta-dihydroxycholest-5-en-26-al + 2 reduced [adrenodoxin] + O2 + H(+) = (25R)-3beta,4beta-dihydroxycholest-5-en-26-oate + 2 oxidized [adrenodoxin] + H2O. It carries out the reaction (25R)-4beta,26-dihydroxycholesterol + 2 reduced [adrenodoxin] + O2 + 2 H(+) = (25R)-3beta,4beta-dihydroxycholest-5-en-26-al + 2 oxidized [adrenodoxin] + 2 H2O. The enzyme catalyses 4beta-hydroxycholesterol + 2 reduced [adrenodoxin] + O2 + 2 H(+) = (25R)-4beta,26-dihydroxycholesterol + 2 oxidized [adrenodoxin] + H2O. It catalyses the reaction (25R)-3beta-hydroxy-5-cholesten-26-al + 2 reduced [adrenodoxin] + O2 + H(+) = (25R)-3beta-hydroxy-5-cholestenoate + 2 oxidized [adrenodoxin] + H2O. The catalysed reaction is (25R)-cholest-5-ene-3beta,26-diol + 2 reduced [adrenodoxin] + O2 + 2 H(+) = (25R)-3beta-hydroxy-5-cholesten-26-al + 2 oxidized [adrenodoxin] + 2 H2O. It carries out the reaction (25R)-3alpha,7alpha,12alpha-trihydroxy-5beta-cholestan-26-al + 2 reduced [adrenodoxin] + O2 + H(+) = (25R)-3alpha,7alpha,12alpha-trihydroxy-5beta-cholestan-26-oate + 2 oxidized [adrenodoxin] + H2O. The enzyme catalyses 5beta-cholestane-3alpha,7alpha,12alpha-triol + 2 reduced [adrenodoxin] + O2 + 2 H(+) = (25R)-5beta-cholestane-3alpha,7alpha,12alpha,26-tetrol + 2 oxidized [adrenodoxin] + H2O. The protein operates within hormone biosynthesis; cholecalciferol biosynthesis. It functions in the pathway steroid metabolism; cholesterol degradation. Its pathway is lipid metabolism; bile acid biosynthesis. In terms of biological role, cytochrome P450 monooxygenase that catalyzes regio- and stereospecific hydroxylation of cholesterol and its derivatives. Hydroxylates (with R stereochemistry) the terminal methyl group of cholesterol side-chain in a three step reaction to yield at first a C26 alcohol, then a C26 aldehyde and finally a C26 acid. Regulates cholesterol homeostasis by catalyzing the conversion of excess cholesterol to bile acids via both the 'neutral' (classic) and the 'acid' (alternative) pathways. May also regulate cholesterol homeostasis via generation of active oxysterols, which act as ligands for NR1H2 and NR1H3 nuclear receptors, modulating the transcription of genes involved in lipid metabolism. Plays a role in cholestanol metabolism in the cerebellum. Similarly to cholesterol, hydroxylates cholestanol and may facilitate sterol diffusion through the blood-brain barrier to the systemic circulation for further degradation. Also hydroxylates retinal 7-ketocholesterol, a noxious oxysterol with pro-inflammatory and pro-apoptotic effects, and may play a role in its elimination from the retinal pigment epithelium. May play a redundant role in vitamin D biosynthesis. Catalyzes 25-hydroxylation of vitamin D3 that is required for its conversion to a functionally active form. In Oryctolagus cuniculus (Rabbit), this protein is Sterol 26-hydroxylase, mitochondrial (CYP27A1).